The chain runs to 468 residues: Eukaryotic translation initiation factor 3 subunit M (468 aa).

The disordered stretch occupies residues 42-61; sequence PLIEPLRQQEQSEEEPDRKQ. In terms of domain architecture, PCI spans 206–377; sequence DLELAQTHVV…SEFLVHRATY (172 aa). The segment at 418–468 is disordered; sequence MQAAAEETGQGKSGDKGAKGGDRRRNPQQQQQSQPSQPQQAREVELVGGAE. Residues 430–442 are compositionally biased toward basic and acidic residues; it reads SGDKGAKGGDRRR. Residues 444 to 457 show a composition bias toward low complexity; sequence PQQQQQSQPSQPQQ.

Belongs to the eIF-3 subunit M family. Component of the eukaryotic translation initiation factor 3 (eIF-3) complex.

Its subcellular location is the cytoplasm. Functionally, component of the eukaryotic translation initiation factor 3 (eIF-3) complex, which is involved in protein synthesis of a specialized repertoire of mRNAs and, together with other initiation factors, stimulates binding of mRNA and methionyl-tRNAi to the 40S ribosome. The eIF-3 complex specifically targets and initiates translation of a subset of mRNAs involved in cell proliferation. This Neosartorya fischeri (strain ATCC 1020 / DSM 3700 / CBS 544.65 / FGSC A1164 / JCM 1740 / NRRL 181 / WB 181) (Aspergillus fischerianus) protein is Eukaryotic translation initiation factor 3 subunit M.